The chain runs to 87 residues: Cell division topological specificity factor (87 aa).

The protein belongs to the MinE family.

Its function is as follows. Prevents the cell division inhibition by proteins MinC and MinD at internal division sites while permitting inhibition at polar sites. This ensures cell division at the proper site by restricting the formation of a division septum at the midpoint of the long axis of the cell. The sequence is that of Cell division topological specificity factor from Aliivibrio fischeri (strain ATCC 700601 / ES114) (Vibrio fischeri).